The sequence spans 757 residues: Protein lsd90 (757 aa).

Polar residues-rich tracts occupy residues 1-11, 19-36, 51-69, and 94-118; these read MVGTINESMQN, TAQS…SSSK, TAGN…SKNL, and DTSN…STYE. Disordered regions lie at residues 1 to 131, 224 to 244, 589 to 633, and 657 to 757; these read MVGT…SRSS, ERAR…EKQA, AQAE…KSKS, and AYVG…MSNK. Residues 166–604 are a coiled coil; it reads DEKTLQDLLE…KVESEYNSVK (439 aa). The segment covering 589–598 has biased composition (basic and acidic residues); the sequence is AQAEQSKVES. The segment covering 619-632 has biased composition (polar residues); sequence VTTNEPTDVSTKSK. Positions 674–693 are enriched in low complexity; the sequence is STPSTLPTSASTNAAATTTT. 718 to 725 is an ATP binding site; sequence GTTGLGKS.

Functionally, may be involved in the metabolism of very long-chain fatty acid-containing phospholipids (VLCFA-PL). The chain is Protein lsd90 (lsd90) from Schizosaccharomyces pombe (strain 972 / ATCC 24843) (Fission yeast).